The sequence spans 256 residues: 5-keto-4-deoxy-D-glucarate aldolase (256 aa).

His50 acts as the Proton acceptor in catalysis. Substrate is bound at residue Gln151. Position 153 (Glu153) interacts with Mg(2+). Substrate contacts are provided by Ser178 and Asp179. A Mg(2+)-binding site is contributed by Asp179.

The protein belongs to the HpcH/HpaI aldolase family. KDGluc aldolase subfamily. As to quaternary structure, homohexamer; trimer of dimers. Mg(2+) is required as a cofactor.

The catalysed reaction is 5-dehydro-4-deoxy-D-glucarate = 2-hydroxy-3-oxopropanoate + pyruvate. The enzyme catalyses 2-dehydro-3-deoxy-D-glucarate = 2-hydroxy-3-oxopropanoate + pyruvate. The protein operates within carbohydrate acid metabolism; galactarate degradation; D-glycerate from galactarate: step 2/3. Catalyzes the reversible retro-aldol cleavage of both 5-keto-4-deoxy-D-glucarate and 2-keto-3-deoxy-D-glucarate to pyruvate and tartronic semialdehyde. The protein is 5-keto-4-deoxy-D-glucarate aldolase of Salmonella paratyphi A (strain ATCC 9150 / SARB42).